The sequence spans 202 residues: MIQPTVKMPKKSVKERQQQVLEVLIGLLNSEDGMQRVTTERLAKAVGVSEGALYRYFPSKTKMFEALIERIEQTLTGYINASKRKENTTASTVKAILYTVIEFARKNPGVTRILTGHALMFEDDQLKARVAKFFDGLEFQFANILQMSKLREGKTFEDERALAGYLVNFCEGQFLRLVRSNFSYNQHQHFEKQWALIKPLFE.

An HTH tetR-type domain is found at 14–75; the sequence is KERQQQVLEV…ALIERIEQTL (62 aa). The H-T-H motif DNA-binding region spans 38–57; it reads TTERLAKAVGVSEGALYRYF.

Belongs to the nucleoid occlusion factor SlmA family. Homodimer. Interacts with FtsZ.

It localises to the cytoplasm. It is found in the nucleoid. Required for nucleoid occlusion (NO) phenomenon, which prevents Z-ring formation and cell division over the nucleoid. Acts as a DNA-associated cell division inhibitor that binds simultaneously chromosomal DNA and FtsZ, and disrupts the assembly of FtsZ polymers. SlmA-DNA-binding sequences (SBS) are dispersed on non-Ter regions of the chromosome, preventing FtsZ polymerization at these regions. This Actinobacillus pleuropneumoniae serotype 5b (strain L20) protein is Nucleoid occlusion factor SlmA.